The chain runs to 510 residues: MIWHVQNENLILDSTRIFMKAFHLLLFDGSFIFPECILIFGLILLLMIDSTSDQKDISWFYFISSTSLVMSIVVLLFRWREEPMISFSGNFQTNNFNEIFQFLILLSSTLCIPLSVEYIECTEMAITEFLLFVLTATLGGMFLCSANDLITIFVAPECFSLCSYLLSGYTKKDVRSNEATMKYLLMGGASSSILVHGFSWLYGSSGGEIELQEIVNGLINTQMYNSPGISIALIFITVGIGFKLSLAPSHQWTPDVYEGSPTPVVAFLSVTSKVAASALATRIFDIPFYFSSNEWHLLLEILAILSMILGNLIAITQTSMKRMLAYSSIGQIGYVIIGIIVGDSNGGYASMITYMLFYISMNLGTFACIVSFGLRTGTDNIRDYAGLYTKDPFLALSLALCLLSLGGLPPLAGFFGKLYLFWCGWQAGLYFLVSIGLLMSVVSIYYYLKIIKLLMTGRNQEITPHVRNYKRSPLRSNNSIELSMIVCVIASTISGISMNPIIEIAQDTLF.

Transmembrane regions (helical) follow at residues 24–44 (LLLF…GLIL), 57–77 (ISWF…VLLF), 99–119 (IFQF…VEYI), 124–144 (MAIT…MFLC), 149–169 (LITI…LSGY), 183–203 (YLLM…WLYG), 227–247 (PGIS…LSLA), 295–315 (WHLL…LIAI), 323–343 (MLAY…IVGD), 354–374 (YMLF…SFGL), 395–415 (ALSL…AGFF), 418–438 (LYLF…IGLL), and 482–502 (LSMI…NPII).

The protein belongs to the complex I subunit 2 family. In terms of assembly, NDH is composed of at least 16 different subunits, 5 of which are encoded in the nucleus.

Its subcellular location is the plastid. The protein localises to the chloroplast thylakoid membrane. The catalysed reaction is a plastoquinone + NADH + (n+1) H(+)(in) = a plastoquinol + NAD(+) + n H(+)(out). It carries out the reaction a plastoquinone + NADPH + (n+1) H(+)(in) = a plastoquinol + NADP(+) + n H(+)(out). In terms of biological role, NDH shuttles electrons from NAD(P)H:plastoquinone, via FMN and iron-sulfur (Fe-S) centers, to quinones in the photosynthetic chain and possibly in a chloroplast respiratory chain. The immediate electron acceptor for the enzyme in this species is believed to be plastoquinone. Couples the redox reaction to proton translocation, and thus conserves the redox energy in a proton gradient. The chain is NAD(P)H-quinone oxidoreductase subunit 2 B, chloroplastic from Lotus japonicus (Lotus corniculatus var. japonicus).